A 728-amino-acid polypeptide reads, in one-letter code: Lutropin-choriogonadotropic hormone receptor (728 aa).

The N-terminal stretch at 1 to 19 (MLPALLPLLLPALLPGAGG) is a signal peptide. Topologically, residues 20–389 (GRCPQRCACT…DILGYSFLRV (370 aa)) are extracellular. LRR repeat units follow at residues 92 to 116 (LPALSEILILNTKNLLHIEDGAFRN), 117 to 142 (LPRLKYLSICNTGIIEFPDLTQIFSS), 144 to 166 (AHFILELCDNLRMTTIPQNAFQG), 168 to 191 (SNESLTLKLYKNGFEDIHSHAFNG), 193 to 215 (KLNQLILKDNKNLRRIHNDALRG), and 216 to 239 (ATGPDVLDISSTALESLPSYGLEA). The helical transmembrane segment at 390 to 410 (LIWFINILALAGNFIVLLVLI) threads the bilayer. The Cytoplasmic segment spans residues 411-420 (TSHYKLTVPR). The helical transmembrane segment at 421–441 (FLMCNLSFADFCMGLYLLLIA) threads the bilayer. The Extracellular portion of the chain corresponds to 442–466 (SVDAQTSGQYYNHAIDWQTGSGCST). A disulfide bridge links C464 with C539. A helical membrane pass occupies residues 467–487 (AGFFTVFASELSVYTLTVITI). The Cytoplasmic segment spans residues 488-507 (ERWHTITYAMQLDRKLRLRH). Residues 508 to 528 (AVPIMLGGWVFSILIAVLPLL) traverse the membrane as a helical segment. Residues 529–551 (GVSSYMKVSICLPMDIETGLSQA) lie on the Extracellular side of the membrane. The chain crosses the membrane as a helical span at residues 552 to 572 (YILLILMLNVIAFLVICACYI). Residues 573–595 (KIYVAVQNPELVAANKDTKIAKR) are Cytoplasmic-facing. A helical membrane pass occupies residues 596 to 616 (MAILIFTDFTCMAPISFFAIS). The Extracellular portion of the chain corresponds to 617–630 (AAIKVPLITVTNSK). The chain crosses the membrane as a helical span at residues 631-651 (ILLVLFYPVNSCANPFLYAIF). Over 652–728 (TKAFQRDFFL…STKKSQPECQ (77 aa)) the chain is Cytoplasmic.

It belongs to the G-protein coupled receptor 1 family. FSH/LSH/TSH subfamily. In terms of tissue distribution, expressed in ovarian follicle granulosa cells. Expressed in ovarian follicle theca cells.

The protein resides in the cell membrane. Functionally, receptor for lutropin-choriogonadotropic hormone. The activity of this receptor is mediated by G proteins which activate adenylate cyclase. The chain is Lutropin-choriogonadotropic hormone receptor from Gallus gallus (Chicken).